The following is a 260-amino-acid chain: MSTNNSVLVLKVGGALLQCEMGMARLMDTAAAMLANGQKVLMVHGGGCLVDEQLAANGMETVKLEGLRVTPPEQMPIIAGALAGTSNKILQGAATKAGIVSVGMSLADGNTVSAKIKDERLGLVGEVTPKDGTYLKFILEQGWMPICSSIAMMDDGQMLNVNADQAATALAKLVGGKLVLLSDVSGVLDGKGQLIHSLNGKQIADLVKQGVIEKGMKVKVEAALEVAQWMGQAVQVASWRDASQLIALAKGEAVGTQIQP.

Residues 46 to 47 (GG), arginine 68, and asparagine 160 contribute to the substrate site.

It belongs to the acetylglutamate kinase family. ArgB subfamily.

The protein localises to the cytoplasm. It carries out the reaction N-acetyl-L-glutamate + ATP = N-acetyl-L-glutamyl 5-phosphate + ADP. The protein operates within amino-acid biosynthesis; L-arginine biosynthesis; N(2)-acetyl-L-ornithine from L-glutamate: step 2/4. Its function is as follows. Catalyzes the ATP-dependent phosphorylation of N-acetyl-L-glutamate. This chain is Acetylglutamate kinase, found in Shewanella putrefaciens (strain CN-32 / ATCC BAA-453).